We begin with the raw amino-acid sequence, 356 residues long: 3-dehydroquinate synthase (356 aa).

NAD(+) contacts are provided by residues 106-110, 130-131, Lys143, and Lys152; these read GVVGD and TT. Zn(2+)-binding residues include Glu185, His248, and His265.

Belongs to the sugar phosphate cyclases superfamily. Dehydroquinate synthase family. The cofactor is NAD(+). Co(2+) is required as a cofactor. Zn(2+) serves as cofactor.

It localises to the cytoplasm. It carries out the reaction 7-phospho-2-dehydro-3-deoxy-D-arabino-heptonate = 3-dehydroquinate + phosphate. It participates in metabolic intermediate biosynthesis; chorismate biosynthesis; chorismate from D-erythrose 4-phosphate and phosphoenolpyruvate: step 2/7. In terms of biological role, catalyzes the conversion of 3-deoxy-D-arabino-heptulosonate 7-phosphate (DAHP) to dehydroquinate (DHQ). This Caldanaerobacter subterraneus subsp. tengcongensis (strain DSM 15242 / JCM 11007 / NBRC 100824 / MB4) (Thermoanaerobacter tengcongensis) protein is 3-dehydroquinate synthase.